The following is a 612-amino-acid chain: Protein cereblon (612 aa).

Residues 1 to 11 show a composition bias toward acidic residues; the sequence is MDDEETAEIED. Disordered regions lie at residues 1–30, 58–133, and 181–211; these read MDDEETAEIEDVNVLVPATGGEGPVDGASA, MELI…NPHP, and QERRRSRTSEEGEASSEPPHTPPPPRSPYDV. A compositionally biased stretch (low complexity) spans 69-81; the sequence is AADAPDAAASTGS. The span at 181-190 shows a compositional bias: basic and acidic residues; that stretch reads QERRRSRTSE. Residues 250 to 478 form the Lon N-terminal domain; the sequence is HMLIFLHQHI…IIGSTLKDES (229 aa). The 110-residue stretch at 477 to 586 folds into the CULT domain; sequence ESVFYCRYCN…LAGSSVRIGK (110 aa). Zn(2+) contacts are provided by Cys-482, Cys-485, Cys-551, and Cys-554.

It belongs to the CRBN family. In terms of assembly, likely a component of a DCX (DDB1-CUL4-X-box) protein ligase complex. May interact with pic/DDB1. Post-translationally, ubiquitinated.

The protein resides in the nucleus. The protein operates within protein modification; protein ubiquitination. Substrate recognition component of a DCX (DDB1-CUL4-X-box) E3 protein ligase complex that mediates the ubiquitination and subsequent proteasomal degradation of target proteins. Has an essential role in mediating growth by negatively regulating insulin signaling. It also has a role in maintaining presynaptic function in the neuromuscular junction synapses of third-instar larvae. The polypeptide is Protein cereblon (Drosophila willistoni (Fruit fly)).